The following is a 627-amino-acid chain: Lactose permease (627 aa).

The interval 1 to 460 is permease; that stretch reads MKKKLVSRLS…AEIVDQLETQ (460 aa). The next 12 membrane-spanning stretches (helical) occupy residues 13-33, 46-66, 84-104, 111-131, 159-179, 193-213, 244-264, 281-301, 309-329, 336-356, 392-412, and 419-439; these read AGAF…IVFV, IFII…LDPL, WVVG…TDFG, PVVY…FYSF, VGST…ILFF, WFFF…TVGL, LLWL…LNAL, LLYT…PSLA, LFYA…VASG, VGAE…LMII, WFVS…ASTI, and VFKL…VSIF. Residues 493–597 form the PTS EIIA type-1 domain; sequence DPVFADKKLG…DDTVIVTVIN (105 aa). At histidine 545 the chain carries Phosphohistidine; by HPr.

In the N-terminal section; belongs to the sodium:galactoside symporter (TC 2.A.2) family.

The protein resides in the cell membrane. Responsible for transport of beta-galactosides into the cell, with the concomitant uptake of protons (symport system), and also for transport of homologous and heterologous exchange of beta-galactosides. This chain is Lactose permease (lacY), found in Lactobacillus delbrueckii subsp. bulgaricus (strain ATCC 11842 / DSM 20081 / BCRC 10696 / JCM 1002 / NBRC 13953 / NCIMB 11778 / NCTC 12712 / WDCM 00102 / Lb 14).